A 306-amino-acid polypeptide reads, in one-letter code: MPFLELTLRCTEATQPRYENALEDVGALAVTLLDAEADTSNEQAILEPGVGETPLWDTLVLSALFPADSNALLLLAALEAFDPELDWSGGSFRAVEDEDWERAWLDQFQPMDFGSRTWIVPWNHELPEAAQAADAAVVRLDPGLAFGSGTHPTTALCLRWLDQLAVDGLLQGQRVLDFGCGSGILALAALKLGAAEAIGVDNDPQALVATADNAERNGEQARMHVYLPQDEPVATYPVVVANILASALDALAELLAARVAAGGRIALSGILHGQEGELLQRYAPWFDDLQATQDGDWMRITGVRRA.

S-adenosyl-L-methionine contacts are provided by Thr154, Gly179, Asp201, and Asn242.

It belongs to the methyltransferase superfamily. PrmA family.

It localises to the cytoplasm. It carries out the reaction L-lysyl-[protein] + 3 S-adenosyl-L-methionine = N(6),N(6),N(6)-trimethyl-L-lysyl-[protein] + 3 S-adenosyl-L-homocysteine + 3 H(+). Methylates ribosomal protein L11. This chain is Ribosomal protein L11 methyltransferase, found in Stenotrophomonas maltophilia (strain R551-3).